The primary structure comprises 217 residues: NADPH-dependent 3-demethoxyubiquinone 3-hydroxylase, mitochondrial (217 aa).

A mitochondrion-targeting transit peptide spans 1–34; that stretch reads MSCARALAACCLWRLRTGALQPLSAYGRRISVRF. 2 repeat units span residues 48–129 and 130–217. Residues 48–217 are 2 X approximate tandem repeats; that stretch reads AVDRIIRVDH…KVAIYLSERL (170 aa). Residue arginine 51 coordinates NADH. Positions 60, 90, 93, 142, 178, and 181 each coordinate Fe cation. NADH is bound by residues lysine 208, tyrosine 212, and arginine 216.

Belongs to the COQ7 family. In terms of assembly, component of a multi-subunit COQ enzyme complex. Interacts with COQ8B and COQ6. Interacts with COQ9. Fe cation serves as cofactor.

It localises to the mitochondrion inner membrane. The enzyme catalyses a 5-methoxy-2-methyl-3-(all-trans-polyprenyl)benzoquinone + NADH + O2 = a 3-demethylubiquinone + NAD(+) + H2O. It functions in the pathway cofactor biosynthesis; ubiquinone biosynthesis. Catalyzes the hydroxylation of the 5-methoxy-2-methyl-3-(all-trans-polyprenyl)benzoquinone at the C6 position and participates in the biosynthesis of ubiquinone. Catalyzes the reaction through a substrate-mediated reduction pathway, whereby NADH shuttles electrons to 5-methoxy-2-methyl-3-(all-trans-decaprenyl)benzoquinone, which then transfers the electrons to the two Fe(3+) centers. The binding of 5-methoxy-2-methyl-3-(all-trans-polyprenyl)benzoquinone (DMQn) mediates reduction of the diiron center by nicotinamide adenine dinucleotide (NADH) and initiates oxygen activation for subsequent DMQ hydroxylation. The physiological substrates are 5-methoxy-2-methyl-3-(all-trans-nonaprenyl)benzoquinone (DMQ(9)) and 5-methoxy-2-methyl-3-(all-trans-decaprenyl)benzoquinone (DMQ(10)), however in vitro the enzyme does not have any specificity concerning the length of the polyprenyl tail, and accepts tails of various lengths with similar efficiency. Also has a structural role in the COQ enzyme complex, stabilizing other COQ polypeptides. Involved in lifespan determination in a ubiquinone-independent manner. Plays a role in modulating mitochondrial stress responses, acting in the nucleus, perhaps via regulating gene expression, independent of its characterized mitochondrial function in ubiquinone biosynthesis. In Bos taurus (Bovine), this protein is NADPH-dependent 3-demethoxyubiquinone 3-hydroxylase, mitochondrial.